Consider the following 61-residue polypeptide: MSEDKGMKDKAKGLKDKVVGDAKDKFGKATDDKGKQVEGKAQKAKGEVEDKTGDAKKKLSE.

The segment at 1-61 is disordered; the sequence is MSEDKGMKDK…TGDAKKKLSE (61 aa).

The protein belongs to the UPF0337 (CsbD) family.

In Listeria monocytogenes serotype 4b (strain F2365), this protein is UPF0337 protein LMOf2365_2190.